A 643-amino-acid polypeptide reads, in one-letter code: Sodium-dependent nutrient amino acid transporter 1 (643 aa).

Residues 1-38 (MELKGVQPSNGSPNGNGNGATNAASTEKTDAEKPTAER) are disordered. Residues 1-40 (MELKGVQPSNGSPNGNGNGATNAASTEKTDAEKPTAERTN) lie on the Cytoplasmic side of the membrane. Residues 8-26 (PSNGSPNGNGNGATNAAST) show a composition bias toward low complexity. Residues 27-36 (EKTDAEKPTA) show a composition bias toward basic and acidic residues. 3 consecutive transmembrane segments (helical) span residues 41-61 (WGNG…LGNV), 74-94 (GAFL…MYYL), and 111-131 (SVVP…ICII). 3 N-linked (GlcNAc...) asparagine glycosylation sites follow: asparagine 185, asparagine 190, and asparagine 200. Helical transmembrane passes span 231–251 (PDWK…LVIM), 260–280 (AAYF…IRAV), 309–329 (AVVQ…MFAS), 343–363 (IVTT…FAIL), 403–423 (LFSV…IVAL), 449–469 (VCGF…ILTL), 476–496 (TYVV…VYGL), 518–538 (CWSF…MATI), and 554–574 (VAGW…GLWY).

This sequence belongs to the sodium:neurotransmitter symporter (SNF) (TC 2.A.22) family.

Its subcellular location is the membrane. Functionally, unusual broad substrate spectrum amino acid:sodium cotransporter that promotes absorption of the D isomers of essential amino acids. Neutral amino acids are the preferred substrates, especially methionine and phenylalanine. This Drosophila simulans (Fruit fly) protein is Sodium-dependent nutrient amino acid transporter 1.